Consider the following 100-residue polypeptide: Large ribosomal subunit protein bL27 (100 aa).

A propeptide spanning residues 1 to 9 is cleaved from the precursor; that stretch reads MLVMNLQLF.

This sequence belongs to the bacterial ribosomal protein bL27 family. In terms of processing, the N-terminus is cleaved by ribosomal processing cysteine protease Prp.

This Clostridium botulinum (strain 657 / Type Ba4) protein is Large ribosomal subunit protein bL27.